Consider the following 194-residue polypeptide: NADH-quinone oxidoreductase subunit B (194 aa).

A compositionally biased stretch (polar residues) spans 1–11 (MGMSQNNSTLV). The segment at 1 to 22 (MGMSQNNSTLVAPQPKGIIDPA) is disordered. [4Fe-4S] cluster contacts are provided by Cys72, Cys73, Cys138, and Cys168.

It belongs to the complex I 20 kDa subunit family. NDH-1 is composed of 14 different subunits. Subunits NuoB, C, D, E, F, and G constitute the peripheral sector of the complex. Requires [4Fe-4S] cluster as cofactor.

The protein resides in the cell inner membrane. The catalysed reaction is a quinone + NADH + 5 H(+)(in) = a quinol + NAD(+) + 4 H(+)(out). In terms of biological role, NDH-1 shuttles electrons from NADH, via FMN and iron-sulfur (Fe-S) centers, to quinones in the respiratory chain. The immediate electron acceptor for the enzyme in this species is believed to be ubiquinone. Couples the redox reaction to proton translocation (for every two electrons transferred, four hydrogen ions are translocated across the cytoplasmic membrane), and thus conserves the redox energy in a proton gradient. This Agrobacterium fabrum (strain C58 / ATCC 33970) (Agrobacterium tumefaciens (strain C58)) protein is NADH-quinone oxidoreductase subunit B.